The sequence spans 301 residues: Porphobilinogen deaminase (301 aa).

Cys242 bears the S-(dipyrrolylmethanemethyl)cysteine mark.

Belongs to the HMBS family. Monomer. Dipyrromethane is required as a cofactor.

The enzyme catalyses 4 porphobilinogen + H2O = hydroxymethylbilane + 4 NH4(+). Its pathway is porphyrin-containing compound metabolism; protoporphyrin-IX biosynthesis; coproporphyrinogen-III from 5-aminolevulinate: step 2/4. Functionally, tetrapolymerization of the monopyrrole PBG into the hydroxymethylbilane pre-uroporphyrinogen in several discrete steps. This is Porphobilinogen deaminase from Rickettsia akari (strain Hartford).